Here is a 110-residue protein sequence, read N- to C-terminus: ATP-dependent Clp protease adapter protein ClpS (110 aa).

This sequence belongs to the ClpS family. In terms of assembly, binds to the N-terminal domain of the chaperone ClpA.

Involved in the modulation of the specificity of the ClpAP-mediated ATP-dependent protein degradation. The chain is ATP-dependent Clp protease adapter protein ClpS from Bartonella henselae (strain ATCC 49882 / DSM 28221 / CCUG 30454 / Houston 1) (Rochalimaea henselae).